The following is a 232-amino-acid chain: Large ribosomal subunit protein uL1 (232 aa).

This sequence belongs to the universal ribosomal protein uL1 family. As to quaternary structure, part of the 50S ribosomal subunit.

Its function is as follows. Binds directly to 23S rRNA. The L1 stalk is quite mobile in the ribosome, and is involved in E site tRNA release. Protein L1 is also a translational repressor protein, it controls the translation of the L11 operon by binding to its mRNA. The chain is Large ribosomal subunit protein uL1 from Phocaeicola vulgatus (strain ATCC 8482 / DSM 1447 / JCM 5826 / CCUG 4940 / NBRC 14291 / NCTC 11154) (Bacteroides vulgatus).